A 1200-amino-acid chain; its full sequence is Nuclear pore complex protein Nup133 (1200 aa).

A disordered region spans residues 1-28; it reads MERNLQKQLYGISRESSPGARRYSMPAA.

The protein belongs to the nucleoporin Nup133 family. In terms of assembly, forms part of the Nup107-Nup160 subcomplex in the nuclear pore.

The protein localises to the nucleus. The protein resides in the nuclear pore complex. In terms of biological role, probable component of the nuclear pore complex (NPC). Plays a role in NPC assembly and/or maintenance. This chain is Nuclear pore complex protein Nup133, found in Drosophila melanogaster (Fruit fly).